The chain runs to 408 residues: MSWDQVWIDVNLATMDPSISAPYGAITNAAIAVKDGKIAWLGPRSELPAFDVLSIPVYRGKGGWITPGLIDAHTHLIFAGNRANEFELRLQGASYEEIARSGGGIISTVKACREADEAELFELGRQRLNALAKEGVTTVEIKSGYGLDTETELKILRVARELGKHHHVDVKTTFLGAHAIPPEYKDNSDGYVDLIINKMLPAVIAENLADAVDVFCENIAFNLEQTERVLSAAKAAGLEIKLHAEQLTNMGGSALAARLGAKSVDHIEYLDEAGVKALSESGTCAVLLPGAFYFLRETQIPPIDLLRQYGVPMVLASDFNPGSSPICSTLLMLNMGCTLFRLTPEEALKGLTLNAAKALGIEDNVGSLVVGKQADFCLWDIATPAQLAYSYGVNPCKDVVKNGKLVHQ.

Positions 73 and 75 each coordinate Fe(3+). The Zn(2+) site is built by His73 and His75. 4-imidazolone-5-propanoate is bound by residues Arg82, Tyr145, and His178. Tyr145 is a binding site for N-formimidoyl-L-glutamate. Fe(3+) is bound at residue His243. His243 contacts Zn(2+). Residue Gln246 coordinates 4-imidazolone-5-propanoate. Asp318 provides a ligand contact to Fe(3+). Asp318 contacts Zn(2+). N-formimidoyl-L-glutamate contacts are provided by Asn320 and Gly322. 4-imidazolone-5-propanoate is bound at residue Ser323.

Belongs to the metallo-dependent hydrolases superfamily. HutI family. Zn(2+) serves as cofactor. Requires Fe(3+) as cofactor.

The protein localises to the cytoplasm. The catalysed reaction is 4-imidazolone-5-propanoate + H2O = N-formimidoyl-L-glutamate. It participates in amino-acid degradation; L-histidine degradation into L-glutamate; N-formimidoyl-L-glutamate from L-histidine: step 3/3. Its function is as follows. Catalyzes the hydrolytic cleavage of the carbon-nitrogen bond in imidazolone-5-propanoate to yield N-formimidoyl-L-glutamate. It is the third step in the universal histidine degradation pathway. In Shewanella baltica (strain OS185), this protein is Imidazolonepropionase.